Here is an 88-residue protein sequence, read N- to C-terminus: Beta-insect excitatory toxin BmKIT1 (88 aa).

A signal peptide spans 1–18 (MKFFLIFLVIFPIMGVLG). Positions 20–83 (KNGYAVDSSG…IKDATKSYCD (64 aa)) constitute an LCN-type CS-alpha/beta domain. 4 disulfides stabilise this stretch: C34–C55, C40–C60, C44–C62, and C56–C82. I87 bears the Isoleucine amide mark.

It belongs to the long (4 C-C) scorpion toxin superfamily. Sodium channel inhibitor family. Beta subfamily. As to expression, expressed by the venom gland.

The protein resides in the secreted. Functionally, excitatory insect beta-toxins induce a spastic paralysis. They bind voltage-independently at site-4 of sodium channels (Nav) and shift the voltage of activation toward more negative potentials thereby affecting sodium channel activation and promoting spontaneous and repetitive firing. This toxin is active only on insects. This is Beta-insect excitatory toxin BmKIT1 from Olivierus martensii (Manchurian scorpion).